Reading from the N-terminus, the 450-residue chain is Phosphoglucosamine mutase (450 aa).

Catalysis depends on Ser101, which acts as the Phosphoserine intermediate. The Mg(2+) site is built by Ser101, Asp240, Asp242, and Asp244. Ser101 is modified (phosphoserine).

The protein belongs to the phosphohexose mutase family. Requires Mg(2+) as cofactor. Activated by phosphorylation.

The catalysed reaction is alpha-D-glucosamine 1-phosphate = D-glucosamine 6-phosphate. Functionally, catalyzes the conversion of glucosamine-6-phosphate to glucosamine-1-phosphate. The chain is Phosphoglucosamine mutase from Streptococcus equi subsp. equi (strain 4047).